The primary structure comprises 342 residues: Succinylglutamate desuccinylase (342 aa).

His63, Glu66, and His155 together coordinate Zn(2+). Glu219 is an active-site residue.

It belongs to the AspA/AstE family. Succinylglutamate desuccinylase subfamily. The cofactor is Zn(2+).

The catalysed reaction is N-succinyl-L-glutamate + H2O = L-glutamate + succinate. It functions in the pathway amino-acid degradation; L-arginine degradation via AST pathway; L-glutamate and succinate from L-arginine: step 5/5. In terms of biological role, transforms N(2)-succinylglutamate into succinate and glutamate. The polypeptide is Succinylglutamate desuccinylase (Vibrio cholerae serotype O1 (strain ATCC 39315 / El Tor Inaba N16961)).